A 255-amino-acid chain; its full sequence is NAD kinase (255 aa).

Residue aspartate 44 is the Proton acceptor of the active site. NAD(+) is bound by residues 44–45, histidine 49, 114–115, aspartate 144, alanine 152, 155–160, and glutamine 216; these read DG, NE, and SAYNLS.

It belongs to the NAD kinase family. A divalent metal cation serves as cofactor.

Its subcellular location is the cytoplasm. The catalysed reaction is NAD(+) + ATP = ADP + NADP(+) + H(+). Involved in the regulation of the intracellular balance of NAD and NADP, and is a key enzyme in the biosynthesis of NADP. Catalyzes specifically the phosphorylation on 2'-hydroxyl of the adenosine moiety of NAD to yield NADP. The polypeptide is NAD kinase (Rickettsia conorii (strain ATCC VR-613 / Malish 7)).